Here is a 419-residue protein sequence, read N- to C-terminus: Cyclin-B2-2 (419 aa).

A disordered region spans residues 79 to 116; the sequence is QPSSAPLAPIGSERQKRTADSAFHGPADMECTKITSDD.

This sequence belongs to the cyclin family. Cyclin AB subfamily. In terms of assembly, interacts with CDKB2-1. Expressed in the intercalary meristem and the elongation zone of internodes. Expressed in adventitious roots at all nodes under submergence conditions.

It is found in the nucleus. In terms of biological role, involved in the control of the cell cycle at the G2/M (mitosis) transition. May associate to CDKB2-1 and activate CDKB2-1 kinase to promote cell division. The polypeptide is Cyclin-B2-2 (CYCB2-2) (Oryza sativa subsp. indica (Rice)).